The chain runs to 343 residues: Branched-chain-amino-acid aminotransferase (343 aa).

An N6-(pyridoxal phosphate)lysine modification is found at lysine 182.

The protein belongs to the class-IV pyridoxal-phosphate-dependent aminotransferase family. The cofactor is pyridoxal 5'-phosphate.

It catalyses the reaction L-leucine + 2-oxoglutarate = 4-methyl-2-oxopentanoate + L-glutamate. The enzyme catalyses L-isoleucine + 2-oxoglutarate = (S)-3-methyl-2-oxopentanoate + L-glutamate. It carries out the reaction L-valine + 2-oxoglutarate = 3-methyl-2-oxobutanoate + L-glutamate. It participates in amino-acid biosynthesis; L-isoleucine biosynthesis; L-isoleucine from 2-oxobutanoate: step 4/4. It functions in the pathway amino-acid biosynthesis; L-leucine biosynthesis; L-leucine from 3-methyl-2-oxobutanoate: step 4/4. Its pathway is amino-acid biosynthesis; L-valine biosynthesis; L-valine from pyruvate: step 4/4. Its function is as follows. Acts on leucine, isoleucine and valine. The protein is Branched-chain-amino-acid aminotransferase (ilvE) of Haemophilus influenzae (strain ATCC 51907 / DSM 11121 / KW20 / Rd).